The sequence spans 242 residues: Orotidine 5'-phosphate decarboxylase (242 aa).

Substrate-binding positions include D16, K37, 64–73 (DLKFHDIPNT), T128, R190, Q199, G219, and R220. Catalysis depends on K66, which acts as the Proton donor.

It belongs to the OMP decarboxylase family. Type 1 subfamily. In terms of assembly, homodimer.

The catalysed reaction is orotidine 5'-phosphate + H(+) = UMP + CO2. It functions in the pathway pyrimidine metabolism; UMP biosynthesis via de novo pathway; UMP from orotate: step 2/2. Catalyzes the decarboxylation of orotidine 5'-monophosphate (OMP) to uridine 5'-monophosphate (UMP). The protein is Orotidine 5'-phosphate decarboxylase of Prochlorococcus marinus (strain AS9601).